The sequence spans 1305 residues: Nonribosomal peptide synthetase hkm11 (1305 aa).

Residues 278 to 672 (TYGELDRWAK…GEIEHHLRPK (395 aa)) are adenylation. Residues 788-864 (APTTEQEALL…SLASRMRQYN (77 aa)) enclose the Carrier domain. Residue serine 825 is modified to O-(pantetheine 4'-phosphoryl)serine. Residues 926–1166 (KGQLDRHQLQ…LCLNITAVRV (241 aa)) are condensation.

This sequence belongs to the NRP synthetase family.

It carries out the reaction hancockiamide D + (E)-cinnamate + ATP = hancockiamide A + AMP + diphosphate. It catalyses the reaction hancockiamide H + (E)-cinnamate + ATP = hancockiamide G + AMP + diphosphate. Its pathway is secondary metabolite biosynthesis. Nonribosomal peptide synthetase; part of the gene cluster that mediates the biosynthesis of hancockiamides, an unusual new family of N-cinnamoylated piperazines. The NRPS hkm10 and the NmrA-like reductase hkm9 are proposed to convert two molecules of L-Phe to the intermediary piperazine called xenocockiamide A. Xenocockiamide A is then converted to hancockiamide D via a series of hydroxylations and O-methylations. The tyrosinase hkm6 may catalyze an aromatic hydroxylation, then the 2-oxoglutarate-dependent Fe(II) dioxygenase hkm4 and the FAD-dependent phenol hydroxylase hkm7 may catalyze consecutive hydroxylations to install 2 more hydroxy groups, and the methyltransferase hkm8 probably catalyzes two methylations using 2 molecules of S-adenosyl-L-methionine (SAM). The NRPS hkm11 activates and transfers trans-cinnamate supplied by the PAL hkm12 to hancockiamide D and produces hancockiamide A. NRPS Hkm11 has the flexibility to tolerate the bulky hancockiamide G as a substrate and the absence of the acetyl-transferase hkm3 opens up the opportunity for hkm11 to introduce a second N-cinnamoyl moiety. The cytochrome P450 monooxygenase hkm5 catalyzes the methylenedioxy bridge formation, converting hancockiamide A into hancockiamide G. Hkm5 can also convert hancockiamide B into hancockiamide C, and hancockiamide D into hancockiamide H. The N-acetyltransferase hkm3 finally transfers an acetyl group to 1-N of piperazine, converting hancockiamide A into hancockiamide B and hancockiamide G into hancockiamide C. This is Nonribosomal peptide synthetase hkm11 from Aspergillus hancockii.